The primary structure comprises 253 residues: Protein PET20, mitochondrial (253 aa).

The transit peptide at 1–36 directs the protein to the mitochondrion; the sequence is MLKLARPFIPPLSRNNAISSGIVLTSRRFQSSFTFL. The disordered stretch occupies residues 44–93; sequence KNQMKSKRKKGSKKAAYHRQPPEHEHTAPLIKQNKTITKKEHSDVRGSHL. The span at 47–60 shows a compositional bias: basic residues; sequence MKSKRKKGSKKAAY. A compositionally biased stretch (basic and acidic residues) spans 81-90; sequence TKKEHSDVRG.

It localises to the mitochondrion. Required for respiratory growth, stability of the mitochondrial genome and for proper assembly or maintenance of mitochondrial proteins. This Saccharomyces cerevisiae (strain ATCC 204508 / S288c) (Baker's yeast) protein is Protein PET20, mitochondrial (PET20).